We begin with the raw amino-acid sequence, 384 residues long: Beta-glucuronosyltransferase GlcAT14C (384 aa).

At 1 to 11 (MKRSHISSPRS) the chain is on the cytoplasmic side. Residues 12–34 (YSRPAISIFGVFLLFLLVLTLSS) form a signal-anchor for type II membrane protein membrane-spanning segment. Residues 35–384 (RKPSDSSSGL…HENFRAKQCK (350 aa)) are Lumenal-facing. N-linked (GlcNAc...) asparagine glycans are attached at residues N156, N285, and N306.

The protein belongs to the glycosyltransferase 14 family.

The protein localises to the golgi apparatus membrane. Beta-glucuronosyltransferase involved in the biosynthesis of type II arabinogalactan (AG). Modifies both the beta-1,6-linked galactan and beta-1,3-linked galactan present in type II AG. The chain is Beta-glucuronosyltransferase GlcAT14C from Arabidopsis thaliana (Mouse-ear cress).